We begin with the raw amino-acid sequence, 237 residues long: 2,3-bisphosphoglycerate-dependent phosphoglycerate mutase (237 aa).

Substrate is bound by residues 8 to 15 (RHGQSQWN), 21 to 22 (TG), R60, 87 to 90 (ERHY), K98, 114 to 115 (RR), and 180 to 181 (GN). Residue H9 is the Tele-phosphohistidine intermediate of the active site. The Proton donor/acceptor role is filled by E87.

The protein belongs to the phosphoglycerate mutase family. BPG-dependent PGAM subfamily. Homodimer.

The enzyme catalyses (2R)-2-phosphoglycerate = (2R)-3-phosphoglycerate. It participates in carbohydrate degradation; glycolysis; pyruvate from D-glyceraldehyde 3-phosphate: step 3/5. Functionally, catalyzes the interconversion of 2-phosphoglycerate and 3-phosphoglycerate. In Caulobacter vibrioides (strain ATCC 19089 / CIP 103742 / CB 15) (Caulobacter crescentus), this protein is 2,3-bisphosphoglycerate-dependent phosphoglycerate mutase.